Consider the following 303-residue polypeptide: Bifunctional protein FolD 2 (303 aa).

NADP(+) is bound by residues 169–171 (GRS), Ser-194, and Ile-235.

The protein belongs to the tetrahydrofolate dehydrogenase/cyclohydrolase family. In terms of assembly, homodimer.

The catalysed reaction is (6R)-5,10-methylene-5,6,7,8-tetrahydrofolate + NADP(+) = (6R)-5,10-methenyltetrahydrofolate + NADPH. It catalyses the reaction (6R)-5,10-methenyltetrahydrofolate + H2O = (6R)-10-formyltetrahydrofolate + H(+). It participates in one-carbon metabolism; tetrahydrofolate interconversion. In terms of biological role, catalyzes the oxidation of 5,10-methylenetetrahydrofolate to 5,10-methenyltetrahydrofolate and then the hydrolysis of 5,10-methenyltetrahydrofolate to 10-formyltetrahydrofolate. In Ectopseudomonas mendocina (strain ymp) (Pseudomonas mendocina), this protein is Bifunctional protein FolD 2.